A 160-amino-acid chain; its full sequence is 17.9 kDa class II heat shock protein (160 aa).

In terms of domain architecture, sHSP spans 44-160 (DARAMAATPA…KPKTIQVQVA (117 aa)).

The protein belongs to the small heat shock protein (HSP20) family.

The protein resides in the cytoplasm. The chain is 17.9 kDa class II heat shock protein (HSP17.9) from Helianthus annuus (Common sunflower).